A 471-amino-acid polypeptide reads, in one-letter code: 3-isopropylmalate dehydratase large subunit (471 aa).

[4Fe-4S] cluster contacts are provided by C349, C409, and C412.

It belongs to the aconitase/IPM isomerase family. LeuC type 1 subfamily. In terms of assembly, heterodimer of LeuC and LeuD. Requires [4Fe-4S] cluster as cofactor.

The catalysed reaction is (2R,3S)-3-isopropylmalate = (2S)-2-isopropylmalate. Its pathway is amino-acid biosynthesis; L-leucine biosynthesis; L-leucine from 3-methyl-2-oxobutanoate: step 2/4. Catalyzes the isomerization between 2-isopropylmalate and 3-isopropylmalate, via the formation of 2-isopropylmaleate. This is 3-isopropylmalate dehydratase large subunit from Aliivibrio fischeri (strain MJ11) (Vibrio fischeri).